The primary structure comprises 982 residues: E3 ubiquitin-protein ligase CBL-B (982 aa).

A 4H region spans residues 35–167 (PPKQAAADRR…KAIFPNGQFQ (133 aa)). The Cbl-PTB domain occupies 35 to 343 (PPKQAAADRR…GRSYNPDLTG (309 aa)). The interval 168 to 240 (GDNFRITKAD…FEFDIFTRLF (73 aa)) is EF-hand-like. Residues aspartate 221, threonine 223, asparagine 225, tyrosine 227, and glutamate 232 each coordinate Ca(2+). Residues 241–343 (QPWGSILRNW…GRSYNPDLTG (103 aa)) are SH2-like. Serine 282 is subject to Phosphoserine; by PKC/PRKCQ. Arginine 286 is a 4-O-phospho-L-tyrosine binding site. The tract at residues 344–372 (LCEPTPHDHIKVTQEQYELYCEMGSTFQL) is linker. Tyrosine 363 is subject to Phosphotyrosine. An RING-type zinc finger spans residues 373 to 412 (CKICAENDKDVKIEPCGHLMCTSCLTAWQESDGQGCPFCR). The disordered stretch occupies residues 465–588 (ASVRKCTDRQ…SVPSRDQPMP (124 aa)). Positions 473 to 486 (RQNSPVTSPGSSPL) are enriched in polar residues. A phosphoserine mark is found at serine 476, serine 480, serine 484, serine 521, serine 525, and serine 529. The tract at residues 543–567 (PLPAPPPPLRDPPPPPERPPPIPPD) is interaction with VAV1. Residues 544–566 (LPAPPPPLRDPPPPPERPPPIPP) show a composition bias toward pro residues. Serine 633 carries the post-translational modification Phosphoserine. Tyrosine 664 and tyrosine 708 each carry phosphotyrosine. 2 disordered regions span residues 702-723 (EDDDDEYKIPSSHPVSLNSQPS) and 745-929 (THGA…EAAL). Over residues 714–723 (HPVSLNSQPS) the composition is skewed to polar residues. The segment covering 819-828 (PSLPPPPPPA) has biased composition (pro residues). The span at 838–848 (PPGSSSRPSSG) shows a compositional bias: low complexity. A compositionally biased stretch (polar residues) spans 884–899 (RASQDYDQLPSSSDGS). Tyrosine 889 is subject to Phosphotyrosine. Residues 891 to 927 (QLPSSSDGSQAPARPPKPRPRRTAPEIHHRKPHGPEA) form an interaction with SH3KBP1 region. A compositionally biased stretch (basic residues) spans 906-922 (PKPRPRRTAPEIHHRKP). Positions 931 to 970 (NVDAKIAKLMGEGYAFEEVKRALEIAQNNVEVARSILREF) constitute a UBA domain.

In terms of assembly, interacts with SH3 domain-containing proteins LCK, CRK and SORBS1. Interacts with LCP2 and ZAP70. Interacts with CBL. Interacts with SH3 domain-containing proteins VAV1, FYN, FGR, PLCG1, GRB2, CRKL, PIK3R1 and SH3KBP1/CIN85. Identified in heterotrimeric complexes with SH3KBP1/CIN85, CD2AP and ARHGEF7, where one CBLB peptide binds two copies of the other protein. Interacts with poly-ubiquitinated proteins. Dimerization is required for the binding of poly-ubiquitin, but not for the binding of mono-ubiquitin. Interacts with EGFR (phosphorylated). Interacts with IFT20. Phosphorylated on tyrosine and serine residues upon TCR or BCR activation. Phosphorylated on Tyr-664 and Tyr-708 in adipocytes following insulin stimulation. In terms of processing, auto-ubiquitinated upon EGF-mediated cell activation or upon T-cell costimulation by CD28; which promotes proteasomal degradation.

Its subcellular location is the cytoplasm. The enzyme catalyses S-ubiquitinyl-[E2 ubiquitin-conjugating enzyme]-L-cysteine + [acceptor protein]-L-lysine = [E2 ubiquitin-conjugating enzyme]-L-cysteine + N(6)-ubiquitinyl-[acceptor protein]-L-lysine.. Its pathway is protein modification; protein ubiquitination. Functionally, E3 ubiquitin-protein ligase which accepts ubiquitin from specific E2 ubiquitin-conjugating enzymes, and transfers it to substrates, generally promoting their degradation by the proteasome. Negatively regulates TCR (T-cell receptor), BCR (B-cell receptor) and FCER1 (high affinity immunoglobulin epsilon receptor) signal transduction pathways. In naive T-cells, inhibits VAV1 activation upon TCR engagement and imposes a requirement for CD28 costimulation for proliferation and IL-2 production. Also acts by promoting PIK3R1/p85 ubiquitination, which impairs its recruitment to the TCR and subsequent activation. In activated T-cells, inhibits PLCG1 activation and calcium mobilization upon restimulation and promotes anergy. In B-cells, acts by ubiquitinating SYK and promoting its proteasomal degradation. Slightly promotes SRC ubiquitination. May be involved in EGFR ubiquitination and internalization. May be functionally coupled with the E2 ubiquitin-protein ligase UB2D3. In association with CBL, required for proper feedback inhibition of ciliary platelet-derived growth factor receptor-alpha (PDGFRA) signaling pathway via ubiquitination and internalization of PDGFRA. The polypeptide is E3 ubiquitin-protein ligase CBL-B (Cblb) (Mus musculus (Mouse)).